A 1163-amino-acid chain; its full sequence is Leptin receptor (1163 aa).

Positions 1-21 (MICQKFCVVLLHWEFICVITA) are cleaved as a signal peptide. Topologically, residues 22–837 (FNLSYPITPW…QDNTEKHQND (816 aa)) are extracellular. 7 N-linked (GlcNAc...) asparagine glycosylation sites follow: Asn-23, Asn-41, Asn-56, Asn-71, Asn-79, Asn-96, and Asn-114. Disulfide bonds link Cys-37-Cys-88 and Cys-87-Cys-97. Cystine bridges form between Cys-129-Cys-140 and Cys-184-Cys-194. N-linked (GlcNAc...) asparagine glycans are attached at residues Asn-185, Asn-204, Asn-274, Asn-345, and Asn-395. The 95-residue stretch at 237-331 (PPLGLRMEIT…TPHVFTTQDV (95 aa)) folds into the Fibronectin type-III 1 domain. Intrachain disulfides connect Cys-350-Cys-410 and Cys-411-Cys-416. Asn-431 carries N-linked (GlcNAc...) asparagine glycosylation. 3 disulfide bridges follow: Cys-434/Cys-445, Cys-471/Cys-526, and Cys-486/Cys-496. The segment at 465–482 (RRSSLYCFDIPSIHPISK) is leptin-binding. 3 Fibronectin type-III domains span residues 537–632 (PPSS…TVVM), 637–730 (PMRG…LTFS), and 738–831 (IVQS…QDNT). A WSXWS motif motif is present at residues 620-624 (WSNWS). Residues Asn-622, Asn-657, Asn-668, Asn-686, Asn-695, Asn-726, and Asn-748 are each glycosylated (N-linked (GlcNAc...) asparagine). Residues 838–860 (AGLYVIVPVIISSSILLLGTLLI) traverse the membrane as a helical segment. The Cytoplasmic portion of the chain corresponds to 861–1163 (LHQRMKKLFW…MENKMCDLTV (303 aa)). Positions 869 to 877 (FWEDVPNPK) match the Box 1 motif motif. Ser-880 bears the Phosphoserine mark. A required for JAK2 activation region spans residues 891 to 896 (ETFEHL). Residues 896–904 (LFIKHTASV) are required for STAT3 phosphorylation. Position 984 is a phosphotyrosine; by JAK2 (Tyr-984). At Tyr-1077 the chain carries Phosphotyrosine. Tyr-1139 bears the Phosphotyrosine; by JAK2 mark.

It belongs to the type I cytokine receptor family. Type 2 subfamily. In terms of assembly, present as a mixture of monomers and dimers. The phosphorylated receptor binds a number of SH2 domain-containing proteins such as JAK2, STAT3, PTPN11, and SOCS3. Interaction with SOCS3 inhibits JAK/STAT signaling and MAPK cascade. In terms of processing, on ligand binding, phosphorylated on two conserved C-terminal tyrosine residues (isoform B only) by JAK2. Tyr-984 is required for complete binding and activation of PTPN11, ERK/FOS activation and, for interaction with SOCS3. Phosphorylation on Tyr-1139 is required for STAT3 binding/activation. On ligand binding, phosphorylated on two conserved C-terminal tyrosine residues (isoform B only) by JAK2. Tyr-984 is required for complete binding and activation of PTPN11, ERK/FOS activation,for interaction with SOCS3 and SOCS3 mediated inhibition of leptin signaling. Phosphorylation on Tyr-1139 is required for STAT3 binding/activation. Phosphorylation of Tyr-1077 has a more accessory role. In terms of tissue distribution, widely expressed. High expression of isoform B in liver, adipose tissue, hypothalamus and choroid plexus.

It is found in the cell membrane. The protein localises to the basolateral cell membrane. Receptor for hormone LEP/leptin. On ligand binding, mediates LEP central and peripheral effects through the activation of different signaling pathways such as JAK2/STAT3 and MAPK cascade/FOS. In the hypothalamus, LEP acts as an appetite-regulating factor that induces a decrease in food intake and an increase in energy consumption by inducing anorexinogenic factors and suppressing orexigenic neuropeptides, also regulates bone mass and secretion of hypothalamo-pituitary-adrenal hormones. In the periphery, increases basal metabolism, influences reproductive function, regulates pancreatic beta-cell function and insulin secretion, is pro-angiogenic and affects innate and adaptive immunity. Control of energy homeostasis and melanocortin production (stimulation of POMC and full repression of AgRP transcription) is mediated by STAT3 signaling, whereas distinct signals regulate NPY and the control of fertility, growth and glucose homeostasis. Involved in the regulation of counter-regulatory response to hypoglycemia by inhibiting neurons of the parabrachial nucleus. Has a specific effect on T lymphocyte responses, differentially regulating the proliferation of naive and memory T-cells. Leptin increases Th1 and suppresses Th2 cytokine production. In terms of biological role, may transport LEP across the blood-brain barrier. Binds LEP and mediates LEP endocytosis. Does not induce phosphorylation of and activate STAT3. This is Leptin receptor (LEPR) from Macaca mulatta (Rhesus macaque).